The following is a 123-amino-acid chain: MPRGCALLLASLLLASALSATLGLGSPVKEKRGWTLNSAGYLLGPHAIDNHRSFHDKYGLAGKRELEPEDEARPGGFDRLQSEDKAIRTIMEFLAFLHLKEAGALGRLPGLPSAASSEDAGQS.

A signal peptide spans 1–19; that stretch reads MPRGCALLLASLLLASALS. Positions 20 to 30 are excised as a propeptide; sequence ATLGLGSPVKE. A61 is subject to Alanine amide. S116 and S117 each carry phosphoserine.

Belongs to the galanin family.

The protein resides in the secreted. Endocrine hormone of the central and peripheral nervous systems that binds and activates the G protein-coupled receptors GALR1, GALR2, and GALR3. This small neuropeptide may regulate diverse physiologic functions including contraction of smooth muscle of the gastrointestinal and genitourinary tract, growth hormone and insulin release and adrenal secretion. In Sus scrofa (Pig), this protein is Galanin peptides (GAL).